A 159-amino-acid polypeptide reads, in one-letter code: MKNTQRQLSSSFMKFLEEKNRDLEAVFAYMDANRDGRISAEELKKSFKTLGEQMSDEEAEAAVKLSDIDGDGMLDINEFALLIKGNDEFTEEEKKRKIMEAFRMYIADGEDCITPGSLKMMLMKLGESRTTDDCKVMIQAFDLNADGVLSFDEFALMMR.

4 consecutive EF-hand domains span residues 18–53 (EKNRDLEAVFAYMDANRDGRISAEELKKSFKTLGEQ), 54–89 (MSDEEAEAAVKLSDIDGDGMLDINEFALLIKGNDEF), 93–128 (EKKRKIMEAFRMYIADGEDCITPGSLKMMLMKLGES), and 129–159 (RTTDDCKVMIQAFDLNADGVLSFDEFALMMR). Ca(2+) is bound by residues aspartate 31, asparagine 33, aspartate 35, arginine 37, glutamate 42, aspartate 67, aspartate 69, aspartate 71, methionine 73, and glutamate 78. Ca(2+) is bound by residues aspartate 142, asparagine 144, aspartate 146, and glutamate 153.

Expressed in the zones of elongation and differentiation in seedling roots and at the root-hypocotyl junction. Expressed from stage 12 of flower development in anthers, specifically in pollen.

In terms of biological role, potential calcium sensor that binds calcium in vitro. In Arabidopsis thaliana (Mouse-ear cress), this protein is Calcium-binding protein CML39 (CML39).